The sequence spans 219 residues: Uracil-DNA glycosylase (219 aa).

Asp-61 functions as the Proton acceptor in the catalytic mechanism.

Belongs to the uracil-DNA glycosylase (UDG) superfamily. UNG family.

It localises to the cytoplasm. The catalysed reaction is Hydrolyzes single-stranded DNA or mismatched double-stranded DNA and polynucleotides, releasing free uracil.. Excises uracil residues from the DNA which can arise as a result of misincorporation of dUMP residues by DNA polymerase or due to deamination of cytosine. This chain is Uracil-DNA glycosylase, found in Haemophilus influenzae (strain 86-028NP).